Here is a 276-residue protein sequence, read N- to C-terminus: D-aminoacyl-tRNA deacylase (276 aa).

This sequence belongs to the DtdA deacylase family. Monomer. Zn(2+) serves as cofactor.

It carries out the reaction a D-aminoacyl-tRNA + H2O = a tRNA + a D-alpha-amino acid + H(+). The enzyme catalyses glycyl-tRNA(Ala) + H2O = tRNA(Ala) + glycine + H(+). Functionally, D-aminoacyl-tRNA deacylase with broad substrate specificity. By recycling D-aminoacyl-tRNA to D-amino acids and free tRNA molecules, this enzyme counteracts the toxicity associated with the formation of D-aminoacyl-tRNA entities in vivo. This Korarchaeum cryptofilum (strain OPF8) protein is D-aminoacyl-tRNA deacylase.